A 179-amino-acid chain; its full sequence is Large ribosomal subunit protein uL6 (179 aa).

It belongs to the universal ribosomal protein uL6 family. In terms of assembly, part of the 50S ribosomal subunit.

Functionally, this protein binds to the 23S rRNA, and is important in its secondary structure. It is located near the subunit interface in the base of the L7/L12 stalk, and near the tRNA binding site of the peptidyltransferase center. This is Large ribosomal subunit protein uL6 from Prochlorococcus marinus (strain MIT 9313).